The sequence spans 312 residues: Tetraacyldisaccharide 4'-kinase (312 aa).

ATP is bound at residue 60–67; that stretch reads IAGGSGKT.

Belongs to the LpxK family.

It catalyses the reaction a lipid A disaccharide + ATP = a lipid IVA + ADP + H(+). It functions in the pathway glycolipid biosynthesis; lipid IV(A) biosynthesis; lipid IV(A) from (3R)-3-hydroxytetradecanoyl-[acyl-carrier-protein] and UDP-N-acetyl-alpha-D-glucosamine: step 6/6. Functionally, transfers the gamma-phosphate of ATP to the 4'-position of a tetraacyldisaccharide 1-phosphate intermediate (termed DS-1-P) to form tetraacyldisaccharide 1,4'-bis-phosphate (lipid IVA). In Helicobacter acinonychis (strain Sheeba), this protein is Tetraacyldisaccharide 4'-kinase.